The following is a 187-amino-acid chain: Large ribosomal subunit protein uL5 (187 aa).

It belongs to the universal ribosomal protein uL5 family. Part of the 50S ribosomal subunit; part of the 5S rRNA/L5/L18/L25 subcomplex. Contacts the 5S rRNA and the P site tRNA. Forms a bridge to the 30S subunit in the 70S ribosome.

This is one of the proteins that bind and probably mediate the attachment of the 5S RNA into the large ribosomal subunit, where it forms part of the central protuberance. In the 70S ribosome it contacts protein S13 of the 30S subunit (bridge B1b), connecting the 2 subunits; this bridge is implicated in subunit movement. Contacts the P site tRNA; the 5S rRNA and some of its associated proteins might help stabilize positioning of ribosome-bound tRNAs. This is Large ribosomal subunit protein uL5 from Mycobacterium sp. (strain JLS).